Consider the following 237-residue polypeptide: Concanavalin V (237 aa).

Residues glutamate 8 and aspartate 10 each coordinate Mn(2+). Residues aspartate 10, tyrosine 12, asparagine 14, and aspartate 19 each coordinate Ca(2+). Asparagine 14 is an a carbohydrate binding site. Mn(2+) contacts are provided by aspartate 19 and histidine 24. A carbohydrate-binding positions include glycine 70, 98–100 (GLY), aspartate 208, and arginine 228.

Belongs to the leguminous lectin family. In terms of assembly, homotetramer. Concanavalin A-like lectins of the Diocleinae subtribe undergo proteolytic processing referred to as circular permutation. The propeptide is split into an N-terminal and a C-terminal part, the gamma and beta chain, respectively. These are then religated in beta-gamma order to form the mature alpha chain. The beta and gamma chains can often be detected in cell extracts. Residues 1-118 of the mature chain, as displayed here, probably constitute the beta chain in the propeptide, residues 119-237 the gamma chain.

D-mannose/D-glucose-binding lectin which binds alpha-methyl-D-mannoside, D-mannose and D-glucose in that order. Also binds to serum fetuin and ovalbumin. Has hemagglutinating activity towards rabbit erythrocytes. Is not toxic towards larvae of the brine shrimp Artemia. Induces relaxation in rat endothelized aorta. Shows a transient edematogenic effect in rat. The protein is Concanavalin V of Canavalia cathartica (Jackbean).